The sequence spans 634 residues: Dynein axonemal assembly factor 1 (634 aa).

Residues 1-80 (MHPEVSEPPV…SRDDREDRGP (80 aa)) form a disordered region. A compositionally biased stretch (basic and acidic residues) spans 22 to 42 (AGDHGDAGPGIRKEEISETKE). A compositionally biased stretch (polar residues) spans 48-62 (CTTSCPSQQQPSGDN). Positions 70 to 80 (HSRDDREDRGP) are enriched in basic and acidic residues. LRR repeat units lie at residues 101-123 (ALNDTLYLHFKGFDRIENLEEYT), 124-145 (GLRCLWLECNGIQRIENLQAQS), 146-167 (ELRCLFLQVNLLHKIENLEPLQ), 168-189 (KLDALNLSNNYIKTIENLSCLP), 190-211 (VLNTLQMAHNRLETVADIEHLR), and 215-236 (RLCVLDLSHNALSDPEILSVLE). Residues 249-288 (NPVTKHIPNYRRTVTVRLKHLTYLDDRPVFPKDRACAEAW) form the LRRCT domain. Residues 326–336 (EERKKARDRGE) are compositionally biased toward basic and acidic residues. Positions 326–358 (EERKKARDRGETPLPDSEGSIPTSPEAEEKQPM) are disordered. At Ser-349 the chain carries Phosphoserine. Thr-462 carries the phosphothreonine modification. Phosphoserine is present on residues Ser-465 and Ser-488. Disordered regions lie at residues 481 to 505 (ISSLSDDSDPELDELSLSTSEATPT) and 559 to 634 (ELND…FGLD).

The protein belongs to the DNAAF1 family.

The protein localises to the cell projection. It localises to the cilium. In terms of biological role, cilium-specific protein required for the stability of the ciliary architecture. Plays a role in cytoplasmic preassembly of dynein arms. Involved in regulation of microtubule-based cilia and actin-based brush border microvilli. This Mus musculus (Mouse) protein is Dynein axonemal assembly factor 1 (Dnaaf1).